Here is a 283-residue protein sequence, read N- to C-terminus: (+)-O-methylkolavelool synthase (283 aa).

Residues Gln106, 129–130 (NA), and His151 contribute to the S-adenosyl-L-methionine site.

The protein belongs to the methyltransferase superfamily.

The enzyme catalyses (+)-kolavelool + S-adenosyl-L-methionine = (+)-O-methylkolavelool + S-adenosyl-L-homocysteine + H(+). Functionally, involved in the biosynthesis of the diterpene (+)-O-methylkolavelool. Catalyzes the transfer of a methyl group from S-adenosyl-L-methionine to the hydroxy group of (+)-kolavelool, forming (+)-O-methylkolavelool. The sequence is that of (+)-O-methylkolavelool synthase from Herpetosiphon aurantiacus (strain ATCC 23779 / DSM 785 / 114-95).